The primary structure comprises 408 residues: Peptidase T (408 aa).

His-78 serves as a coordination point for Zn(2+). Residue Asp-80 is part of the active site. Zn(2+) is bound at residue Asp-140. Glu-173 functions as the Proton acceptor in the catalytic mechanism. Residues Glu-174, Asp-196, and His-379 each coordinate Zn(2+).

This sequence belongs to the peptidase M20B family. Zn(2+) serves as cofactor.

The protein localises to the cytoplasm. It carries out the reaction Release of the N-terminal residue from a tripeptide.. Functionally, cleaves the N-terminal amino acid of tripeptides. In Shigella boydii serotype 18 (strain CDC 3083-94 / BS512), this protein is Peptidase T.